Consider the following 623-residue polypeptide: uncharacterized protein (623 aa).

The span at 157 to 166 (LNESPLRDQQ) shows a compositional bias: basic and acidic residues. Positions 157–237 (LNESPLRDQQ…QGLPDHNNSI (81 aa)) are disordered. Polar residues predominate over residues 167–177 (ESSTPSKNSTL). Residues 193 to 210 (AFRPLPSPSRRSSQSAPA) are compositionally biased toward low complexity.

This is an uncharacterized protein from Macaca fascicularis (Crab-eating macaque).